The primary structure comprises 486 residues: ATP synthase subunit beta, chloroplastic (486 aa).

154-161 provides a ligand contact to ATP; the sequence is GGAGVGKT.

The protein belongs to the ATPase alpha/beta chains family. As to quaternary structure, F-type ATPases have 2 components, CF(1) - the catalytic core - and CF(0) - the membrane proton channel. CF(1) has five subunits: alpha(3), beta(3), gamma(1), delta(1), epsilon(1). CF(0) has four main subunits: a(1), b(1), b'(1) and c(9-12).

The protein resides in the plastid. It localises to the chloroplast thylakoid membrane. The catalysed reaction is ATP + H2O + 4 H(+)(in) = ADP + phosphate + 5 H(+)(out). In terms of biological role, produces ATP from ADP in the presence of a proton gradient across the membrane. The catalytic sites are hosted primarily by the beta subunits. This Dennstaedtia punctilobula (Hay-scented fern) protein is ATP synthase subunit beta, chloroplastic.